Here is a 198-residue protein sequence, read N- to C-terminus: Remorin (198 aa).

Residues 1–11 show a composition bias toward basic and acidic residues; it reads MAELEAKKVEI. Residues 1–24 are disordered; sequence MAELEAKKVEIVDPAPPAPGPVEA. Residues 97 to 184 are a coiled coil; that stretch reads EESEKSKAEN…LKAEELAAKY (88 aa).

This sequence belongs to the remorin family. In terms of processing, the N-terminus is blocked. Phosphorylated.

The protein resides in the cell membrane. Binds to both simple and complex galacturonides. May be involved in cell-to-cell signaling and molecular transport. In Solanum tuberosum (Potato), this protein is Remorin.